We begin with the raw amino-acid sequence, 102 residues long: Protein GOLVEN 4 (102 aa).

An N-terminal signal peptide occupies residues 1–27; that stretch reads MEMKKWSYANLITLALLFLFFIILLLA. Residues 28–89 constitute a propeptide that is removed on maturation; that stretch reads FQGGSRDDDH…QEREVYVELR (62 aa). The segment at 56–78 is disordered; sequence KSLKPINPTKKNGFEYPDQGSHD. At Tyr91 the chain carries Sulfotyrosine. Pro99 carries the hydroxyproline modification.

The protein belongs to the RGF family. As to quaternary structure, binds to LRR receptor-like serine/threonine-protein kinases to trigger their dimerization with SERK proteins and subsequent signaling. Expressed in roots and sepals.

It is found in the secreted. Signaling peptide (root growth factor) that promotes root hairs formation and growth. Maintains the postembryonic root stem cell niche. Regulates the pattern of root growth and lateral root development by modulating the length and the number of cortical cells in the root apical meristem (RAM), and the anticlinal asymmetric cell divisions in lateral root initiation cells. The sequence is that of Protein GOLVEN 4 from Arabidopsis thaliana (Mouse-ear cress).